The sequence spans 462 residues: Kremen protein 2 (462 aa).

A signal peptide spans 1 to 25; the sequence is MGTQALQGFLFLLFLPLLQPRGASA. Residues 26-364 lie on the Extracellular side of the membrane; the sequence is GSLHSPGLSE…SPRPGAPPAA (339 aa). A Kringle domain is found at 35–119; sequence ECFQVNGADY…YWRYCDIPSC (85 aa). 3 disulfides stabilise this stretch: Cys36–Cys119, Cys60–Cys100, and Cys89–Cys114. N-linked (GlcNAc...) asparagine glycosylation is present at Asn49. Residues 121 to 215 form the WSC domain; it reads MPGYLGCFVD…DGRLGVYEVS (95 aa). Cys219 and Cys245 form a disulfide bridge. The CUB domain occupies 219–326; sequence CQGNWTAPQG…QGFALTYRGL (108 aa). 3 N-linked (GlcNAc...) asparagine glycosylation sites follow: Asn222, Asn244, and Asn351. The tract at residues 328–352 is disordered; it reads DAAEDPEAPEGSAQTPAAPLDGANV. The chain crosses the membrane as a helical span at residues 365 to 387; it reads IGARVFSTVTAVSVLLLLLLGLL. At 388–462 the chain is on the cytoplasmic side; the sequence is RPLRRRSCLL…SSLRSLISAL (75 aa).

Interacts with ERLEC1. Forms a ternary complex with DKK1 and LRP6.

It localises to the membrane. Its function is as follows. Receptor for Dickkopf proteins. Cooperates with DKK1/2 to inhibit Wnt/beta-catenin signaling by promoting the endocytosis of Wnt receptors LRP5 and LRP6. Plays a role in limb development; attenuates Wnt signaling in the developing limb to allow normal limb patterning and can also negatively regulate bone formation. This chain is Kremen protein 2 (KREMEN2), found in Homo sapiens (Human).